The following is a 562-amino-acid chain: MDREGPRGPRSGASQENEQWKKETLEDEFSGVRLQKLEQQRQLFEKKQRRKRQEPLMVQANPDATLRHRRPRRGEERFQSDSSWGLGVGSPFLQENVPQAHLPSGAHSALVTMSYVADGSGERAPLLSPRGAVYTRGNGPAVRHHLCWLPDSSDSDVEEVTMEDIPVISRPPQTNLANLRRGWLASPGPGISQEEKEEEVGSTDARVEDKTPSPDPDPDPTVNSDGDHGDLAPCKVEENTAQKNTETASGIGDEDREKGEVTESTETNYAPVASKVLQGDDGDASNHNAWNMTCPQPRIPGPRLGEDMEAYVLLPAPRDHMVQCRIVRNKHGMDKGMFPSYYLYLEAEDGVAHFLLAGRKRKRSKTSNYLISLDPKDMSRNGSNFVGKVRSNVLGTKFTIFDNGVNPERSYWVPDSARIREELGVVCYETNVLGFRGPRKMTVILPGMDSRKQRMKVQPQNDQDSILSRVQKGAGHGLLLLQNKAPSWSDESGAYVLNFHGRVTRASVKNFQIVHPDEPDHLVLQFGRVAPNIFTMDFRYPLCPLQAFAICLSSFDGKLAFF.

The interval 1 to 81 (MDREGPRGPR…RRGEERFQSD (81 aa)) is disordered. The segment covering 35–46 (QKLEQQRQLFEK) has biased composition (basic and acidic residues). A phosphoserine mark is found at Ser152, Ser153, and Ser155. Residues 179 to 294 (LRRGWLASPG…SNHNAWNMTC (116 aa)) are disordered. Thr211 is modified (phosphothreonine). Residue Ser213 is modified to Phosphoserine. Positions 225 to 240 (DGDHGDLAPCKVEENT) are enriched in basic and acidic residues. Polar residues predominate over residues 285 to 294 (SNHNAWNMTC).

It belongs to the TUB family. Expressed in retina and testis.

Its subcellular location is the cytoplasm. It is found in the secreted. This Mus musculus (Mouse) protein is Tubby-related protein 2 (Tulp2).